The following is a 948-amino-acid chain: RNA polymerase-associated protein RapA (948 aa).

In terms of domain architecture, Helicase ATP-binding spans E164 to N332. Position 177 to 184 (D177 to T184) interacts with ATP. Positions D278–H281 match the DEAH box motif. One can recognise a Helicase C-terminal domain in the interval R473–H627.

The protein belongs to the SNF2/RAD54 helicase family. RapA subfamily. In terms of assembly, interacts with the RNAP. Has a higher affinity for the core RNAP than for the holoenzyme. Its ATPase activity is stimulated by binding to RNAP.

Functionally, transcription regulator that activates transcription by stimulating RNA polymerase (RNAP) recycling in case of stress conditions such as supercoiled DNA or high salt concentrations. Probably acts by releasing the RNAP, when it is trapped or immobilized on tightly supercoiled DNA. Does not activate transcription on linear DNA. Probably not involved in DNA repair. The protein is RNA polymerase-associated protein RapA of Pseudomonas syringae pv. syringae (strain B728a).